The chain runs to 76 residues: VpAmp1.0 (76 aa).

A signal peptide spans 1–22 (MKLINLVPVFFVLIIVVDYCHS). Isoleucine 41 is subject to Isoleucine amide. A propeptide spanning residues 42–76 (GKRSVESQRYVDLNRRDLEQDLQELQDFLDQISEH) is cleaved from the precursor.

The protein belongs to the non-disulfide-bridged peptide (NDBP) superfamily. Short antimicrobial peptide (group 4) family. As to expression, expressed by the venom gland.

It is found in the secreted. It localises to the target cell membrane. In terms of biological role, antimicrobial peptide with potent activity against Gram-positive bacteria S.aureus (MIC=2.5 uM) and S.agalactiaea (MIC=2.5 uM), and Gram-negative bacteria E.coli (MIC=24 uM) and P.aeruginosa (MIC=2.5 uM), as well as against yeasts Candida albicans (MIC=6.25 uM) and C.glabrata (MIC&gt;50 uM). Also elicits high hemolysis on human erythrocytes (HC(50)=9.2 uM). The chain is VpAmp1.0 from Mesomexovis punctatus (Scorpion).